Reading from the N-terminus, the 421-residue chain is ATP-dependent RNA helicase RhlB (421 aa).

The Q motif signature appears at 9-37 (QKFSDFALHPKVVEALEKKGFHNCTPIQA). Positions 40 to 219 (LPLTLAGRDV…FEQMNNAEYI (180 aa)) constitute a Helicase ATP-binding domain. 53–60 (AQTGTGKT) contacts ATP. Residues 165-168 (DEAD) carry the DEAD box motif. The Helicase C-terminal domain occupies 245-390 (RLLQTLIEEE…VSKYNPDALM (146 aa)). The interval 392–421 (DLPKPLRLTRPRTGNGPRRTGAPRNRRRSG) is disordered. Low complexity predominate over residues 402–414 (PRTGNGPRRTGAP).

The protein belongs to the DEAD box helicase family. RhlB subfamily. Component of the RNA degradosome, which is a multiprotein complex involved in RNA processing and mRNA degradation.

Its subcellular location is the cytoplasm. The enzyme catalyses ATP + H2O = ADP + phosphate + H(+). In terms of biological role, DEAD-box RNA helicase involved in RNA degradation. Has RNA-dependent ATPase activity and unwinds double-stranded RNA. The polypeptide is ATP-dependent RNA helicase RhlB (Escherichia fergusonii (strain ATCC 35469 / DSM 13698 / CCUG 18766 / IAM 14443 / JCM 21226 / LMG 7866 / NBRC 102419 / NCTC 12128 / CDC 0568-73)).